A 310-amino-acid polypeptide reads, in one-letter code: Cysteine synthase (310 aa).

Position 46 is an N6-(pyridoxal phosphate)lysine (Lys-46). Pyridoxal 5'-phosphate contacts are provided by residues Asn-76, 180–184, and Ser-268; that span reads GTGGT.

This sequence belongs to the cysteine synthase/cystathionine beta-synthase family. Homodimer. Requires pyridoxal 5'-phosphate as cofactor.

It catalyses the reaction O-acetyl-L-serine + hydrogen sulfide = L-cysteine + acetate. It functions in the pathway amino-acid biosynthesis; L-cysteine biosynthesis; L-cysteine from L-serine: step 2/2. This Staphylococcus aureus (strain Mu50 / ATCC 700699) protein is Cysteine synthase (cysK).